We begin with the raw amino-acid sequence, 102 residues long: Large ribosomal subunit protein bL21 (102 aa).

This sequence belongs to the bacterial ribosomal protein bL21 family. As to quaternary structure, part of the 50S ribosomal subunit. Contacts protein L20.

Its function is as follows. This protein binds to 23S rRNA in the presence of protein L20. In Geobacillus sp. (strain WCH70), this protein is Large ribosomal subunit protein bL21.